We begin with the raw amino-acid sequence, 123 residues long: Small ribosomal subunit protein uS12 (123 aa).

Aspartate 89 carries the post-translational modification 3-methylthioaspartic acid.

The protein belongs to the universal ribosomal protein uS12 family. In terms of assembly, part of the 30S ribosomal subunit. Contacts proteins S8 and S17. May interact with IF1 in the 30S initiation complex.

Its function is as follows. With S4 and S5 plays an important role in translational accuracy. In terms of biological role, interacts with and stabilizes bases of the 16S rRNA that are involved in tRNA selection in the A site and with the mRNA backbone. Located at the interface of the 30S and 50S subunits, it traverses the body of the 30S subunit contacting proteins on the other side and probably holding the rRNA structure together. The combined cluster of proteins S8, S12 and S17 appears to hold together the shoulder and platform of the 30S subunit. The chain is Small ribosomal subunit protein uS12 from Brucella anthropi (strain ATCC 49188 / DSM 6882 / CCUG 24695 / JCM 21032 / LMG 3331 / NBRC 15819 / NCTC 12168 / Alc 37) (Ochrobactrum anthropi).